A 153-amino-acid polypeptide reads, in one-letter code: Large ribosomal subunit protein uL15 (153 aa).

Over residues 1–40 (MTDKKRRQRGSRTHGGGTHKNRRGAGNRGGRGRAGRKKHE) the composition is skewed to basic residues. The interval 1 to 60 (MTDKKRRQRGSRTHGGGTHKNRRGAGNRGGRGRAGRKKHEQHNYEDVGKSGFKRPEKTDR) is disordered. Residues 41 to 60 (QHNYEDVGKSGFKRPEKTDR) show a composition bias toward basic and acidic residues.

The protein belongs to the universal ribosomal protein uL15 family. As to quaternary structure, part of the 50S ribosomal subunit.

Binds to the 23S rRNA. This Halobacterium salinarum (strain ATCC 29341 / DSM 671 / R1) protein is Large ribosomal subunit protein uL15.